A 317-amino-acid polypeptide reads, in one-letter code: MREKLFWILKKYGVSDHIAKAFLEIPREEFLTKSYPLSYVYEDIVLVSYDDGEEYSTSSQPSLMALFMEWVGLDKGMRVLEIGGGTGYNAAVMSRVVGEKGLVVSVEYSRKICEIAKRNVERLGIENVIFVCGDGYYGVPEFSPYDVIFVTVGVDEVPETWFTQLKEGGRVIVPINLKLSRRQPAFLFKKKDPYLVGNYKLETRFITAGGNLGNLLERNRKLLREFPFNREILLVRSHIFVELVDLLTRRLTEIDGTFYYAGPNGVVEFLDDRMRIYGDAPEIENLLTQWESCGYRSFEYLMLHVGYNAFSHISCSI.

Ser-59 is a catalytic residue.

Belongs to the methyltransferase superfamily. L-isoaspartyl/D-aspartyl protein methyltransferase family. In terms of assembly, monomer.

It localises to the cytoplasm. It catalyses the reaction [protein]-L-isoaspartate + S-adenosyl-L-methionine = [protein]-L-isoaspartate alpha-methyl ester + S-adenosyl-L-homocysteine. Catalyzes the methyl esterification of L-isoaspartyl residues in peptides and proteins that result from spontaneous decomposition of normal L-aspartyl and L-asparaginyl residues. It plays a role in the repair and/or degradation of damaged proteins. The sequence is that of Protein-L-isoaspartate O-methyltransferase (pcm) from Thermotoga maritima (strain ATCC 43589 / DSM 3109 / JCM 10099 / NBRC 100826 / MSB8).